Here is a 453-residue protein sequence, read N- to C-terminus: Na(+)/H(+) antiporter NhaA (453 aa).

The next 11 helical transmembrane spans lie at 22–42, 72–92, 108–128, 137–157, 166–186, 189–209, 218–238, 316–336, 343–363, 386–406, and 424–444; these read ASLL…SPWA, MLAF…GLEI, LLPI…YMLV, GAAI…GLLG, IFLT…IALF, GHIA…LYVG, LFFY…GIHP, PLVN…VTFG, LVNV…LGIF, LFGV…IANL, and LGVF…LKWV.

This sequence belongs to the NhaA Na(+)/H(+) (TC 2.A.33) antiporter family.

It localises to the cell inner membrane. It carries out the reaction Na(+)(in) + 2 H(+)(out) = Na(+)(out) + 2 H(+)(in). Its function is as follows. Na(+)/H(+) antiporter that extrudes sodium in exchange for external protons. This chain is Na(+)/H(+) antiporter NhaA, found in Parabacteroides distasonis (strain ATCC 8503 / DSM 20701 / CIP 104284 / JCM 5825 / NCTC 11152).